Reading from the N-terminus, the 664-residue chain is Cyclic nucleotide-gated channel alpha-2 (664 aa).

Residues 1-10 (MMTEKSNGVK) are compositionally biased toward polar residues. Residues 1–51 (MMTEKSNGVKSSPANNHNHHPPPSIKANGKDDHRAGSRPQSVAADDDTSPE) are disordered. Over 1–146 (MMTEKSNGVK…PAGDWYYRWL (146 aa)) the chain is Cytoplasmic. The helical transmembrane segment at 147-168 (FVIAMPVLYNWCLLVARACFSD) threads the bilayer. Topologically, residues 169 to 178 (LQRNYFVVWL) are extracellular. Residues 179-199 (VLDYFSDTVYIADLIIRLRTG) traverse the membrane as a helical segment. At 200-224 (FLEQGLLVKDPKKLRDNYIHTLQFK) the chain is on the cytoplasmic side. A helical transmembrane segment spans residues 225–243 (LDVASIIPTDLIYFAVGIH). Residues 244–248 (SPEVR) lie on the Extracellular side of the membrane. Residues 249–267 (FNRLLHFARMFEFFDRTET) traverse the membrane as a helical segment. Residues 268–274 (RTSYPNI) are Cytoplasmic-facing. The segment at 272–380 (PNIFRISNLV…GNVGSMISNM (109 aa)) is ion conduction pathway. The chain crosses the membrane as a helical span at residues 275–298 (FRISNLVLYILVIIHWNACIYYVI). The Extracellular segment spans residues 299 to 321 (SKSIGFGVDTWVYPNITDPEYGY). The next 2 membrane-spanning stretches (helical) occupy residues 322–356 (LARE…LFVI) and 357–381 (FDFL…SNMN). The interval 339-342 (TIGE) is selectivity filter. Positions 382 to 458 (ATRAEFQAKI…STLKKVRIFQ (77 aa)) are C-linker. Over 382–664 (ATRAEFQAKI…INTPEPTAAE (283 aa)) the chain is Cytoplasmic. Positions 462–582 (AGLLVELVLK…EERGREILMK (121 aa)) are cyclic nucleotide-binding domain. Residues Gly-522, Ser-525, Arg-538, and Thr-539 each contribute to the 3',5'-cyclic GMP site. Arg-538 and Thr-539 together coordinate 3',5'-cyclic AMP. Positions 599 to 653 (VQEKLEQLETNMDTLYTRFARLLAEYTGAQQKLKQRITVLETKMKQNHEDDYLSD) form a coiled coil.

This sequence belongs to the cyclic nucleotide-gated cation channel (TC 1.A.1.5) family. CNGA2 subfamily. In terms of assembly, the olfactory cyclic nucleotide-gated channel is an heterotetramer composed of CNGA2, CNGA4 and CNGB1b subunits with 2:1:1 stoichiometry. As to expression, olfactory neurons. Widely expressed in brain, enriched in deep cerebellar nuclei, olfactory bulb mitral cells and cerebellar Purkinje neurons. Expressed in olfactory sensory cilia (at protein level).

Its subcellular location is the cell projection. The protein localises to the cilium membrane. The enzyme catalyses Ca(2+)(in) = Ca(2+)(out). It catalyses the reaction Na(+)(in) = Na(+)(out). It carries out the reaction K(+)(in) = K(+)(out). The catalysed reaction is NH4(+)(in) = NH4(+)(out). The enzyme catalyses Rb(+)(in) = Rb(+)(out). It catalyses the reaction Li(+)(in) = Li(+)(out). It carries out the reaction Cs(+)(in) = Cs(+)(out). The channel activity is inhibited by L-cis diltiazem. Pore-forming subunit of the olfactory cyclic nucleotide-gated channel. Operates in the cilia of olfactory sensory neurons where chemical stimulation of the odorant is converted to an electrical signal. Mediates odorant-induced cAMP-dependent Ca(2+) influx triggering neuron depolarization. The rise of intracellular Ca(2+) levels potentiates the olfactory response by activating Ca(2+)-dependent Cl(-) channels, but it also serves as a negative feedback signal to desensitize the channel for rapid adaptation to odorants. Conducts cAMP- and cGMP-gated ion currents, with permeability for monovalent and divalent cations. The polypeptide is Cyclic nucleotide-gated channel alpha-2 (Rattus norvegicus (Rat)).